The following is a 582-amino-acid chain: Putative transcriptional regulator HVO_1357 (582 aa).

The Response regulatory domain occupies 19–129 (VVLVVDDDED…EVKETVEELL (111 aa)). A 4-aspartylphosphate modification is found at Asp67. Residues 165–203 (LSDLRSRLEAVRAEHEAAIRNREAQLDRLNRTNELLRDV) are a coiled coil. The 53-residue stretch at 517–569 (LTDRQRTVLETSLVSGYFEWPRGSTAEEVADSLGISPPTLHEHLRTAERKLIE) folds into the HTH bat-type domain.

May be part of a signal-dependent gene regulation cascade that is relevant to swimming motility. May be involved in the transcription regulation of target genes. In Haloferax volcanii (strain ATCC 29605 / DSM 3757 / JCM 8879 / NBRC 14742 / NCIMB 2012 / VKM B-1768 / DS2) (Halobacterium volcanii), this protein is Putative transcriptional regulator HVO_1357.